The chain runs to 787 residues: MTEKQINVPARAYGFPPDAYDPSLLPDFDVSFLRPEDLEAFIQALSAPDTTQPPDDGLASPRSPSARSFSSFDFTKRASSVLPDDAQVVAAHAAAAGGETAPIPGDNDTNNANGFGNSSSQSLFITAQSDWAPVHEKVVGSQTHRQKKSSRRRKRSKAVAPGRRTRDETREGYLYGLLKWPFLLIVGAWIVGLAVTYLFTRAYIFIYEQFVAWRGRREKLRRNMRATSRYPDWVKAARDLDNFLGNEAWKEQNEFAYYDSKTVRRVWDSLRRSRIRAAQMEASGSQSSSSSNEGKTTPIEDLKVLIEACVKNNFVGVENPRLYSQTYYGTKNLVQNYVDEVEKSLTALLETKQLSMEDKRSIFKRVSANYGRTALCLSGGASFAYYHFGVVKALLEEDLLPDVITGTSGGALVAALVATRTNEELKKLLVPSLSTKITACREPITVWFRRWWSTGARFDSVDWAKQCSWWSHGSMTFREAYERTGRILNVSCVPADPHSPTILCNYLTSPDCVIWSAVLASAAVPGILNPVVLMMKKADGNLAPYSFGHKWKDGSLRTDIPIRALNLQFNVNFTIVSQVNPHINLFFFSSRGSVGQPVTHRRGRGWRGGFLGSATEQYIKLDLTKWLKVLRQLELLPRPLGQDWSQLWLQQSFGGTVTIWPKTILSDFVHILSDPDNARLARMIHEGQQSTFPKIKFISNRLRIERLIERGRRETRPYIRRGSVESIISEDDLRELLLLRGSTNGTDEEITTNDEMEFASDEKAVLTEDEGQFDGVTDNTEGSPLLK.

2 disordered regions span residues 47–69 (APDT…ARSF) and 137–164 (KVVG…PGRR). Residues 59–69 (ASPRSPSARSF) are compositionally biased toward low complexity. A compositionally biased stretch (basic residues) spans 144 to 157 (HRQKKSSRRRKRSK). Residues 180–200 (WPFLLIVGAWIVGLAVTYLFT) form a helical membrane-spanning segment. The PNPLA domain occupies 375 to 566 (LCLSGGASFA…RTDIPIRALN (192 aa)). Positions 406 to 410 (GTSGG) match the GXSXG motif. The active-site Nucleophile is the serine 408. Aspartate 553 (proton acceptor) is an active-site residue. The disordered stretch occupies residues 745–787 (GTDEEITTNDEMEFASDEKAVLTEDEGQFDGVTDNTEGSPLLK). Residues 746–759 (TDEEITTNDEMEFA) show a composition bias toward acidic residues. Positions 777–787 (TDNTEGSPLLK) are enriched in polar residues.

The protein belongs to the PLPL family.

It is found in the membrane. Its function is as follows. Probable lipid hydrolase. The polypeptide is Patatin-like phospholipase domain-containing protein OOU_Y34scaffold00095g16.3 (Pyricularia oryzae (strain Y34) (Rice blast fungus)).